A 201-amino-acid chain; its full sequence is FMN-dependent NADH:quinone oxidoreductase (201 aa).

Residues Ser-9 and 16–18 (SYS) contribute to the FMN site.

The protein belongs to the azoreductase type 1 family. As to quaternary structure, homodimer. The cofactor is FMN.

It carries out the reaction 2 a quinone + NADH + H(+) = 2 a 1,4-benzosemiquinone + NAD(+). The enzyme catalyses N,N-dimethyl-1,4-phenylenediamine + anthranilate + 2 NAD(+) = 2-(4-dimethylaminophenyl)diazenylbenzoate + 2 NADH + 2 H(+). Functionally, quinone reductase that provides resistance to thiol-specific stress caused by electrophilic quinones. Also exhibits azoreductase activity. Catalyzes the reductive cleavage of the azo bond in aromatic azo compounds to the corresponding amines. This is FMN-dependent NADH:quinone oxidoreductase from Mesomycoplasma hyopneumoniae (strain 7448) (Mycoplasma hyopneumoniae).